Reading from the N-terminus, the 227-residue chain is A-type potassium channel modulatory protein KCNIP1 (227 aa).

The EF-hand 1; degenerate domain maps to 38-94 (LEMTMVCHRPEGLEQLEAQTNFTKRELQVLYRGFKNECPSGVVNEDTFKQIYAQFFP). 3 consecutive EF-hand domains span residues 97–132 (DASTYAHYLFNAFDTTQTGSVKFEDFVTALSILLRG), 133–168 (TVHEKLRWTFNLYDINKDGYINKEEMMDIVKAIYDM), and 181–216 (TPRQHVDVFFQKMDKNKDGIVTLDEFLESCQEDDNI). 9 residues coordinate Ca(2+): Asp-146, Asn-148, Asp-150, Tyr-152, Glu-157, Asp-194, Asn-196, Asp-198, and Glu-205. The segment at 214 to 227 (DNIMRSLQLFQNVM) is interaction with KCND2.

It belongs to the recoverin family. As to quaternary structure, component of heteromultimeric potassium channels. Identified in potassium channel complexes containing KCND1, KCND2, KCND3, KCNIP1, KCNIP2, KCNIP3, KCNIP4, DPP6 and DPP10. Part of a heterooctamer composed of the tetrameric channel and four KCNIP1 chains. Probably part of a complex consisting of KCNIP1, KCNIP2 isoform 3 and KCND2. Self-associates to form homodimers and homotetramers. Interacts with KCNIP2 isoform 3 in a calcium-dependent manner. Interacts with Naja atra venom CTX3. Interacts with KCND2; this interaction mediates the capture of both the N- and C-terminus of KCND2, thus preventing KCND2 N-type inactivation and modulates the channel gating kinetics. Interacts with KCND3; each KCNIP1 monomer interacts with two adjacent KCND3 subunits, through both the N-terminal inactivation ball of a KCND3 subunit and a C-terminal helix from the adjacent KCND3 subunit, clamping them together; this interaction stabilizes the tetrameric form and modulates the channel gating kinetics namely channel activation and inactivation kinetics and rate of recovery from inactivation. Isoform 1 and isoform 2 are expressed in brain and kidney. Isoform 1 is also expressed in liver, pancreas, skeletal muscle, small intestine and testis. Isoform 2 is also expressed in lung, pancreas, leukocytes, prostate and thymus.

Its subcellular location is the cell membrane. It is found in the cytoplasm. It localises to the cell projection. The protein localises to the dendrite. Regulatory subunit of Kv4/D (Shal)-type voltage-gated rapidly inactivating A-type potassium channels. Regulates channel density, inactivation kinetics and rate of recovery from inactivation in a calcium-dependent and isoform-specific manner. In vitro, modulates KCND1/Kv4.1 and KCND2/Kv4.2 currents. Increases the presence of KCND2 at the cell surface. The chain is A-type potassium channel modulatory protein KCNIP1 from Homo sapiens (Human).